The chain runs to 426 residues: Probable imidazolonepropionase (426 aa).

4-imidazolone-5-propanoate-binding residues include Y159 and H192. Y159 provides a ligand contact to N-formimidoyl-L-glutamate. H260 contributes to the Fe(3+) binding site. H260 serves as a coordination point for Zn(2+). Residue E263 participates in 4-imidazolone-5-propanoate binding. Residue D334 coordinates Fe(3+). D334 is a Zn(2+) binding site. N336 lines the N-formimidoyl-L-glutamate pocket.

Belongs to the metallo-dependent hydrolases superfamily. HutI family. Requires Zn(2+) as cofactor. Fe(3+) serves as cofactor.

The catalysed reaction is 4-imidazolone-5-propanoate + H2O = N-formimidoyl-L-glutamate. It functions in the pathway amino-acid degradation; L-histidine degradation into L-glutamate; N-formimidoyl-L-glutamate from L-histidine: step 3/3. This chain is Probable imidazolonepropionase (Amdhd1), found in Mus musculus (Mouse).